We begin with the raw amino-acid sequence, 66 residues long: Large ribosomal subunit protein bL33c (66 aa).

Belongs to the bacterial ribosomal protein bL33 family.

The protein localises to the plastid. Its subcellular location is the chloroplast. The polypeptide is Large ribosomal subunit protein bL33c (Populus alba (White poplar)).